The sequence spans 496 residues: Lysine--tRNA ligase (496 aa).

2 residues coordinate Mg(2+): Glu408 and Glu415.

This sequence belongs to the class-II aminoacyl-tRNA synthetase family. As to quaternary structure, homodimer. Requires Mg(2+) as cofactor.

It is found in the cytoplasm. It catalyses the reaction tRNA(Lys) + L-lysine + ATP = L-lysyl-tRNA(Lys) + AMP + diphosphate. This Legionella pneumophila (strain Corby) protein is Lysine--tRNA ligase.